The following is a 66-amino-acid chain: Large ribosomal subunit protein uL29 (66 aa).

Belongs to the universal ribosomal protein uL29 family.

The sequence is that of Large ribosomal subunit protein uL29 from Thermosipho africanus (strain TCF52B).